The chain runs to 284 residues: Ribosomal RNA small subunit methyltransferase A (284 aa).

S-adenosyl-L-methionine contacts are provided by Asn-28, Leu-30, Gly-55, Glu-77, Asp-103, and Asn-123.

This sequence belongs to the class I-like SAM-binding methyltransferase superfamily. rRNA adenine N(6)-methyltransferase family. RsmA subfamily.

It localises to the cytoplasm. The enzyme catalyses adenosine(1518)/adenosine(1519) in 16S rRNA + 4 S-adenosyl-L-methionine = N(6)-dimethyladenosine(1518)/N(6)-dimethyladenosine(1519) in 16S rRNA + 4 S-adenosyl-L-homocysteine + 4 H(+). Specifically dimethylates two adjacent adenosines (A1518 and A1519) in the loop of a conserved hairpin near the 3'-end of 16S rRNA in the 30S particle. May play a critical role in biogenesis of 30S subunits. This is Ribosomal RNA small subunit methyltransferase A from Bradyrhizobium diazoefficiens (strain JCM 10833 / BCRC 13528 / IAM 13628 / NBRC 14792 / USDA 110).